A 436-amino-acid chain; its full sequence is O-phosphoseryl-tRNA(Sec) selenium transferase (436 aa).

The tetramerization stretch occupies residues 1–44; it reads MLDFNIEGLIPKNMEKRGELVLNEYLKEIEDVFNHRKIPENGID. R72 is a binding site for pyridoxal 5'-phosphate. Residues 93-103 form a phosphate loop (P-loop) region; that stretch reads GRSGNLVDPQP. Residues R94, S95, and Q102 each contribute to the substrate site. K278 is subject to N6-(pyridoxal phosphate)lysine. Substrate is bound at residue R307.

Belongs to the SepSecS family. As to quaternary structure, homotetramer. Pyridoxal 5'-phosphate is required as a cofactor.

It catalyses the reaction O-phospho-L-seryl-tRNA(Sec) + selenophosphate + H2O = L-selenocysteinyl-tRNA(Sec) + 2 phosphate. It functions in the pathway aminoacyl-tRNA biosynthesis; selenocysteinyl-tRNA(Sec) biosynthesis; selenocysteinyl-tRNA(Sec) from L-seryl-tRNA(Sec) (archaeal/eukaryal route): step 2/2. Its function is as follows. Converts O-phosphoseryl-tRNA(Sec) to selenocysteinyl-tRNA(Sec) required for selenoprotein biosynthesis. In Methanococcus maripaludis (strain DSM 14266 / JCM 13030 / NBRC 101832 / S2 / LL), this protein is O-phosphoseryl-tRNA(Sec) selenium transferase (spcS).